The following is a 544-amino-acid chain: Ribosomal protein S6 kinase-like 1 (544 aa).

In terms of domain architecture, MIT spans 87-115; the sequence is VHVDPNKERREAVKLKITKYLRRAEEIFN. Residues 145 to 534 form the Protein kinase domain; that stretch reads SALEQLKGCR…TSRLKSHPFF (390 aa). ATP contacts are provided by residues 151 to 159 and K177; that span reads KGCRVVGII. Disordered regions lie at residues 262 to 344 and 353 to 372; these read PAEL…HWVR and AYGRGRGRNPPSANRASLGS. The span at 303–313 shows a compositional bias: polar residues; it reads SRPSAVFSSDP. Catalysis depends on D407, which acts as the Proton acceptor.

The protein belongs to the protein kinase superfamily. Ser/Thr protein kinase family. S6 kinase subfamily.

The catalysed reaction is L-seryl-[protein] + ATP = O-phospho-L-seryl-[protein] + ADP + H(+). The enzyme catalyses L-threonyl-[protein] + ATP = O-phospho-L-threonyl-[protein] + ADP + H(+). This is Ribosomal protein S6 kinase-like 1 (Rps6kl1) from Mus musculus (Mouse).